The primary structure comprises 434 residues: Enolase (434 aa).

Gln165 serves as a coordination point for (2R)-2-phosphoglycerate. Glu207 functions as the Proton donor in the catalytic mechanism. Mg(2+) is bound by residues Asp244, Glu291, and Asp318. (2R)-2-phosphoglycerate contacts are provided by Lys343, Arg372, Ser373, and Lys394. Catalysis depends on Lys343, which acts as the Proton acceptor.

The protein belongs to the enolase family. It depends on Mg(2+) as a cofactor.

It is found in the cytoplasm. The protein resides in the secreted. The protein localises to the cell surface. The enzyme catalyses (2R)-2-phosphoglycerate = phosphoenolpyruvate + H2O. The protein operates within carbohydrate degradation; glycolysis; pyruvate from D-glyceraldehyde 3-phosphate: step 4/5. Functionally, catalyzes the reversible conversion of 2-phosphoglycerate (2-PG) into phosphoenolpyruvate (PEP). It is essential for the degradation of carbohydrates via glycolysis. The polypeptide is Enolase (Staphylococcus epidermidis (strain ATCC 35984 / DSM 28319 / BCRC 17069 / CCUG 31568 / BM 3577 / RP62A)).